The sequence spans 124 residues: Ribonuclease P protein component (124 aa).

Belongs to the RnpA family. As to quaternary structure, consists of a catalytic RNA component (M1 or rnpB) and a protein subunit.

The enzyme catalyses Endonucleolytic cleavage of RNA, removing 5'-extranucleotides from tRNA precursor.. Functionally, RNaseP catalyzes the removal of the 5'-leader sequence from pre-tRNA to produce the mature 5'-terminus. It can also cleave other RNA substrates such as 4.5S RNA. The protein component plays an auxiliary but essential role in vivo by binding to the 5'-leader sequence and broadening the substrate specificity of the ribozyme. In Synechocystis sp. (strain ATCC 27184 / PCC 6803 / Kazusa), this protein is Ribonuclease P protein component.